We begin with the raw amino-acid sequence, 208 residues long: Mitochondrial import inner membrane translocase subunit Tim23 (208 aa).

3 helical membrane passes run 73–93 (FELA…FGTL), 125–145 (ASWA…GVAI), and 173–193 (GLKG…LYAL).

It belongs to the Tim17/Tim22/Tim23 family. As to quaternary structure, component of the TIM23 complex at least composed of timm23, timm17 and timm50. The complex interacts with the timm44 component of the PAM complex.

It is found in the mitochondrion inner membrane. In terms of biological role, essential component of the TIM23 complex, a complex that mediates the translocation of transit peptide-containing proteins across the mitochondrial inner membrane. Plays an essential role in early embryonic development. This Danio rerio (Zebrafish) protein is Mitochondrial import inner membrane translocase subunit Tim23 (timm23).